Here is a 365-residue protein sequence, read N- to C-terminus: MVYVSNKYLTMSEMKVNAQYILNYLSNNGWTKQAICGMLGNMQSESTINPGLWQNLDEGNTSLGFGLVQWTPASNYINWANNQGIPYKNMDSELKRIIWEVNNNAQWNNLRDMTFKEYIKSTKTPRELAMIFLASYERPANPNQPVRGDQAEYWYKNLSGGGGGGLQLAQFPMDIINITQGENGSFSHKGTLCIDFVGKTEKYPYYAPCDCTCVWRGDASAYLAWTSDKEVMCADGSVRYITWVNVHESPLPFDVGKKLKKGDLMGHTGIGGNVTGDHWHFNVIDGKEYQGWTKKPDSCLAGTELHIYDVFAVNNVEIINGNGYDWKTSDWQDGDGGDGGDDNENNKTKDLITLLLSDALHGWKA.

A lysozyme-like glycosidase region spans residues 1 to 159; the sequence is MVYVSNKYLT…QAEYWYKNLS (159 aa). Residue Glu45 is the For lysozyme-like glycosidase activity of the active site. Substrate is bound by residues Glu45, Thr71, Gln106, and 137–140; that span reads ERPA. The segment at 160 to 165 is linker; it reads GGGGGG. Residues 166–365 are probable metalloendopeptidase; the sequence is LQLAQFPMDI…LSDALHGWKA (200 aa). The Zn(2+) site is built by His188, Asp195, and His280.

In the N-terminal section; belongs to the glycosyl hydrolase 24 family. This sequence in the C-terminal section; belongs to the peptidase M23B family. It depends on Zn(2+) as a cofactor.

Its subcellular location is the virion. Its function is as follows. May serve as a plug to restrain the highly pressurized packaged genome and thus would be the first virion protein to contact the host cell wall, degrading the peptidoglycan layer and thereby facilitating viral genome entry into the host bacteria. Acts probably as a multifunctional enzyme that degrades N-acetylglucosamine polymers (in vitro) and cleaves the peptide cross-links of the host cell wall. Essential for the tail assembly. The protein is Morphogenesis protein 1 (13) of Bacillus subtilis (Bacteriophage PZA).